We begin with the raw amino-acid sequence, 105 residues long: MAESPFKADIERAQKELTEKMTPGAIAYIPGSSVINKTGSWRVFRPEFKKDKCVRCFLCYIYCPEPAIYLDEEGYPVFDYDYCKGCGICANECPTNAIEMVREVK.

2 4Fe-4S ferredoxin-type domains span residues 44–73 and 74–103; these read FRPE…LDEE and GYPV…MVRE. Residues C53, C56, C59, C63, C83, C86, C89, and C93 each coordinate [4Fe-4S] cluster.

Heterotetramer of one alpha, one beta, one delta and one gamma chain. [4Fe-4S] cluster serves as cofactor.

The polypeptide is Pyruvate synthase subunit PorD (porD) (Pyrococcus abyssi (strain GE5 / Orsay)).